A 109-amino-acid chain; its full sequence is Protein reprimo (109 aa).

Residues Asn-7 and Asn-18 are each glycosylated (N-linked (GlcNAc...) asparagine). The helical transmembrane segment at 56–76 threads the bilayer; the sequence is VVQIAVMCVLSLTVVFGIFFL. A Phosphoserine modification is found at Ser-98.

It belongs to the reprimo family.

The protein localises to the cytoplasm. Its subcellular location is the membrane. May be involved in the regulation of p53-dependent G2 arrest of the cell cycle. Seems to induce cell cycle arrest by inhibiting CDK1 activity and nuclear translocation of the CDC2 cyclin B1 complex. The polypeptide is Protein reprimo (Rprm) (Mus musculus (Mouse)).